A 726-amino-acid polypeptide reads, in one-letter code: Transmembrane channel-like protein 8 (726 aa).

The Cytoplasmic portion of the chain corresponds to Met-1 to Arg-114. Position 6 is a phosphoserine (Ser-6). Residues Phe-115–Leu-135 traverse the membrane as a helical segment. At Val-136–Ser-200 the chain is on the lumenal side. An N-linked (GlcNAc...) asparagine glycan is attached at Asn-148. The helical transmembrane segment at Ile-201–Leu-221 threads the bilayer. At Arg-222–Tyr-299 the chain is on the cytoplasmic side. Residues Leu-300–Ala-320 form a helical membrane-spanning segment. Residues Thr-321–Tyr-338 lie on the Lumenal side of the membrane. The chain crosses the membrane as a helical span at residues Leu-339–Val-359. The Cytoplasmic segment spans residues Gln-360–Glu-426. Positions Glu-362–Ser-530 are TMC domain. Residues Leu-427–Leu-447 traverse the membrane as a helical segment. Topologically, residues Pro-448–Gly-488 are lumenal. The helical transmembrane segment at Leu-489–Ile-509 threads the bilayer. Residues Lys-510 to Thr-531 lie on the Cytoplasmic side of the membrane. The chain crosses the membrane as a helical span at residues Phe-532 to Val-552. At Val-553 to Leu-594 the chain is on the lumenal side. Residue Asn-567 is glycosylated (N-linked (GlcNAc...) asparagine). Residues Gly-595–Val-615 traverse the membrane as a helical segment. Over Ser-616 to Leu-726 the chain is Cytoplasmic. A disordered region spans residues Pro-651–Leu-726. Residues Glu-652–Lys-662 show a composition bias toward pro residues. Residues Ser-658 and Ser-673 each carry the phosphoserine modification.

Belongs to the TMC family. Interacts with TMC6. Interacts and forms a complex with TMC6 and CIB1; the interaction stabilizes each component of the complex. Interacts and forms a complex with TMC6 and SLC30A1/ZNT1; the interaction regulates zinc transport into the ER. Interacts with TRADD; the interaction competes with TRADD/RIPK1/TRAF2/cIAPs complex I formation and facilites complex II formation. As to quaternary structure, (Microbial infection) Interacts with human papillomavirus 16/HPV16 protein E5; the interaction alleviates TMC8-mediated transcription factors inhibition. In terms of tissue distribution, expressed in placenta, prostate and testis.

It is found in the endoplasmic reticulum membrane. The protein localises to the golgi apparatus membrane. The protein resides in the nucleus membrane. Acts as a regulatory protein involved in the regulation of numerous cellular processes. Together with its homolog TMC6/EVER1, forms a complex with calcium-binding protein CIB1 in lymphocytes and keratynocytes where TMC6 and TMC8 stabilize CIB1 levels and reciprocally. Together with TMC6, also forms a complex with and activates zinc transporter ZNT1 at the ER membrane of keratynocytes, thereby facilitating zinc uptake into the ER. Also inhibits receptor-mediated calcium release from ER stores and calcium activated and volume regulated chloride channels. Down-regulates the activity of transcription factors induced by zinc and cytokines. Also sequesters TRADD which impairs the recruitment of TRAF2 and RIPK1 in the pro-survival complex I and promotes proapoptotic complex II formation, and may therefore be involved in TNF-induced cell death/survival decisions. This chain is Transmembrane channel-like protein 8, found in Homo sapiens (Human).